Consider the following 372-residue polypeptide: Cyclin-dependent kinase 9 (372 aa).

The Protein kinase domain maps to 19-315; the sequence is YEKLAKIGQG…SDDALNHDFF (297 aa). 25-33 contacts ATP; that stretch reads IGQGTFGEV. Residue K44 is modified to N6-acetyllysine; by EP300/CBP, PCAF/KAT2B and GCN5/KAT2A. ATP-binding positions include K48 and 104-106; that span reads DFC. At K48 the chain carries N6-acetyllysine; by PCAF/KAT2B and GCN5/KAT2A. The active-site Proton acceptor is the D149. The segment at 166–191 is T-loop; it reads ADFGLARAFSLAKNSQPNRYTNRVVT. An ATP-binding site is contributed by D167. S175 is subject to Phosphoserine. T186 bears the Phosphothreonine; by CaMK1D mark. A disordered region spans residues 343–372; sequence RRKGSQITQQSTNQSRNPATTNQTEFERVF. At S347 the chain carries Phosphoserine; by CDK9 and PKA. Over residues 347–366 the composition is skewed to polar residues; the sequence is SQITQQSTNQSRNPATTNQT. The residue at position 350 (T350) is a Phosphothreonine; by CDK9. At S353 the chain carries Phosphoserine; by CDK9. The residue at position 354 (T354) is a Phosphothreonine; by CDK9. S357 bears the Phosphoserine; by CDK9 mark. Residues T362 and T363 each carry the phosphothreonine; by CDK9 modification.

The protein belongs to the protein kinase superfamily. CMGC Ser/Thr protein kinase family. CDC2/CDKX subfamily. Component of the super elongation complex (SEC), at least composed of EAF1, EAF2, CDK9, MLLT3/AF9, AFF (AFF1 or AFF4), the P-TEFb complex and ELL (ELL, ELL2 or ELL3). Associates with CCNT1/cyclin-T1, CCNT2/cyclin-T2 (isoform A and isoform B) or CCNK/cyclin-K to form active P-TEFb. P-TEFb forms a complex with AFF4/AF5Q31 and is part of the super elongation complex (SEC). Component of a complex which is composed of at least 5 members: HTATSF1/Tat-SF1, P-TEFb complex, RNA pol II, SUPT5H, and NCL/nucleolin. Associates with UBR5 and forms a transcription regulatory complex composed of CDK9, RNAP II, UBR5 and TFIIS/TCEA1 that can stimulate target gene transcription (e.g. gamma fibrinogen/FGG) by recruiting their promoters. Component of the 7SK snRNP inactive complex which is composed of at least 8 members: P-TEFb (composed of CDK9 and CCNT1/cyclin-T1), HEXIM1, HEXIM2, LARP7, BCDIN3, SART3 proteins and 7SK and U6 snRNAs. This inactive 7SK snRNP complex can also interact with NCOR1 and HDAC3, probably to regulate CDK9 acetylation. Release of P-TEFb from P-TEFb/7SK snRNP complex requires both PP2B to transduce calcium Ca(2+) signaling in response to stimuli (e.g. UV or hexamethylene bisacetamide (HMBA)), and PPP1CA to dephosphorylate Thr-186. This released P-TEFb remains inactive in the pre-initiation complex with BRD4 until new Thr-186 phosphorylation occurs after the synthesis of a short RNA. Interacts with BRD4; to target chromatin binding. Interacts with JMJD6. Interacts with activated nuclear STAT3 and RELA/p65. Binds to AR and MYOD1. Forms a complex composed of CDK9, CCNT1/cyclin-T1, EP300 and GATA4 that stimulates hypertrophy in cardiomyocytes. The large PER complex involved in the repression of transcriptional termination is composed of at least PER2, CDK9, DDX5, DHX9, NCBP1 and POLR2A (active). Interacts with HSF1. Interacts with TBX21. Interacts with WDR43. Interacts with ZMYND8; the association appears to occur between homodimeric ZMYND8 and the activated form of the P-TEFb complex. Post-translationally, autophosphorylation at Thr-186, Ser-347, Thr-350, Ser-353, Thr-354 and Ser-357 triggers kinase activity by promoting cyclin and substrate binding upon conformational changes. Thr-186 phosphorylation requires the calcium Ca(2+) signaling pathway, including CaMK1D and calmodulin. This inhibition is relieved by Thr-29 dephosphorylation. Phosphorylation at Ser-175 inhibits kinase activity. Can be phosphorylated on either Thr-362 or Thr-363 but not on both simultaneously. In terms of processing, dephosphorylation of Thr-186 by PPM1A and PPM1B blocks CDK9 activity and may lead to CDK9 proteasomal degradation. However, PPP1CA-mediated Thr-186 dephosphorylation is required to release P-TEFb from its inactive P-TEFb/7SK snRNP complex. Dephosphorylated at Ser-347 by the PNUTS-PP1 complex during RNA polymerase II transcription pause-release. Dephosphorylation of C-terminus Thr and Ser residues by protein phosphatase-1 (PP1) triggers CDK9 activity. N6-acetylation of Lys-44 promotes kinase activity, whereas acetylation of both Lys-44 and Lys-48 mediated by PCAF/KAT2B and GCN5/KAT2A reduces kinase activity. The acetylated form associates with PML bodies in the nuclear matrix and with the transcriptionally silent HIV-1 genome; deacetylated upon transcription stimulation. Deacetylated by SIRT7, promoting the kinase activity and subsequent 'Ser-2' phosphorylation of the C-terminal domain (CTD) of RNA polymerase II. Post-translationally, polyubiquitinated and thus activated by UBR5. This ubiquitination is promoted by TFIIS/TCEA1 and favors 'Ser-2' phosphorylation of RPB1/POLR2A CTD. As to expression, expressed at high levels in brain and kidney.

It is found in the nucleus. The protein resides in the cytoplasm. Its subcellular location is the PML body. The enzyme catalyses L-seryl-[protein] + ATP = O-phospho-L-seryl-[protein] + ADP + H(+). It carries out the reaction L-threonyl-[protein] + ATP = O-phospho-L-threonyl-[protein] + ADP + H(+). The catalysed reaction is [DNA-directed RNA polymerase] + ATP = phospho-[DNA-directed RNA polymerase] + ADP + H(+). Its activity is regulated as follows. Activation by Thr-186 phosphorylation is calcium Ca(2+) signaling pathway-dependent; actively inactivated by dephosphorylation mediated by PPP1CA, PPM1A and PPM1B. Reversibly repressed by acetylation at Lys-44 and Lys-48. Functionally, protein kinase involved in the regulation of transcription. Member of the cyclin-dependent kinase pair (CDK9/cyclin-T) complex, also called positive transcription elongation factor b (P-TEFb), which facilitates the transition from abortive to productive elongation by phosphorylating the CTD (C-terminal domain) of the large subunit of RNA polymerase II (RNAP II) POLR2A, SUPT5H and RDBP. This complex is inactive when in the 7SK snRNP complex form. Phosphorylates EP300, MYOD1, RPB1/POLR2A and AR and the negative elongation factors DSIF and NELFE. Regulates cytokine inducible transcription networks by facilitating promoter recognition of target transcription factors (e.g. TNF-inducible RELA/p65 activation and IL-6-inducible STAT3 signaling). Promotes RNA synthesis in genetic programs for cell growth, differentiation and viral pathogenesis. P-TEFb is also involved in cotranscriptional histone modification, mRNA processing and mRNA export. Modulates a complex network of chromatin modifications including histone H2B monoubiquitination (H2Bub1), H3 lysine 4 trimethylation (H3K4me3) and H3K36me3; integrates phosphorylation during transcription with chromatin modifications to control co-transcriptional histone mRNA processing. The CDK9/cyclin-K complex has also a kinase activity towards CTD of RNAP II and can substitute for CDK9/cyclin-T P-TEFb in vitro. Replication stress response protein; the CDK9/cyclin-K complex is required for genome integrity maintenance, by promoting cell cycle recovery from replication arrest and limiting single-stranded DNA amount in response to replication stress, thus reducing the breakdown of stalled replication forks and avoiding DNA damage. In addition, probable function in DNA repair of isoform 2 via interaction with KU70/XRCC6. Promotes cardiac myocyte enlargement. RPB1/POLR2A phosphorylation on 'Ser-2' in CTD activates transcription. AR phosphorylation modulates AR transcription factor promoter selectivity and cell growth. DSIF and NELF phosphorylation promotes transcription by inhibiting their negative effect. The phosphorylation of MYOD1 enhances its transcriptional activity and thus promotes muscle differentiation. Catalyzes phosphorylation of KAT5, promoting KAT5 recruitment to chromatin and histone acetyltransferase activity. The sequence is that of Cyclin-dependent kinase 9 (Cdk9) from Mus musculus (Mouse).